Consider the following 142-residue polypeptide: MAKKVTGYLKLQVPAGAANPSPPIGPALGQRGLNIMEFCKAFNAQTQKEEKNTPIPVIITIYADRSFTFEMKTPPMSYFLKQAAKIQSGSKAPGRDKAGKVTKAQVREIAEKKMKDLNCDTIESAMKMVEGSARSMGLEVAG.

It belongs to the universal ribosomal protein uL11 family. Part of the ribosomal stalk of the 50S ribosomal subunit. Interacts with L10 and the large rRNA to form the base of the stalk. L10 forms an elongated spine to which L12 dimers bind in a sequential fashion forming a multimeric L10(L12)X complex. In terms of processing, one or more lysine residues are methylated.

In terms of biological role, forms part of the ribosomal stalk which helps the ribosome interact with GTP-bound translation factors. The sequence is that of Large ribosomal subunit protein uL11 from Bradyrhizobium diazoefficiens (strain JCM 10833 / BCRC 13528 / IAM 13628 / NBRC 14792 / USDA 110).